The sequence spans 25 residues: Ocellatin-1 (25 aa).

Valine amide is present on V25.

In terms of tissue distribution, expressed by the skin dorsal glands.

The protein localises to the secreted. In terms of biological role, has hemolytic activity against human erythrocytes and antibacterial activity against the Gram-negative bacterium E.coli. The polypeptide is Ocellatin-1 (Leptodactylus ocellatus (Argus frog)).